A 155-amino-acid chain; its full sequence is Regulatory protein RecX (155 aa).

The protein belongs to the RecX family.

It localises to the cytoplasm. In terms of biological role, modulates RecA activity. In Pseudomonas entomophila (strain L48), this protein is Regulatory protein RecX.